A 393-amino-acid chain; its full sequence is Formate-dependent phosphoribosylglycinamide formyltransferase (393 aa).

N(1)-(5-phospho-beta-D-ribosyl)glycinamide contacts are provided by residues 22-23 and Glu82; that span reads EL. Residues Arg114, Lys155, 160–165, 195–198, and Glu203 each bind ATP; these read SSGHGQ and EGFV. In terms of domain architecture, ATP-grasp spans 119–308; it reads RLAAEELGLP…EFALHARAIL (190 aa). Mg(2+) contacts are provided by Glu267 and Glu279. Residues Asp286, Lys356, and 363–364 contribute to the N(1)-(5-phospho-beta-D-ribosyl)glycinamide site; that span reads RR.

It belongs to the PurK/PurT family. Homodimer.

The enzyme catalyses N(1)-(5-phospho-beta-D-ribosyl)glycinamide + formate + ATP = N(2)-formyl-N(1)-(5-phospho-beta-D-ribosyl)glycinamide + ADP + phosphate + H(+). The protein operates within purine metabolism; IMP biosynthesis via de novo pathway; N(2)-formyl-N(1)-(5-phospho-D-ribosyl)glycinamide from N(1)-(5-phospho-D-ribosyl)glycinamide (formate route): step 1/1. Involved in the de novo purine biosynthesis. Catalyzes the transfer of formate to 5-phospho-ribosyl-glycinamide (GAR), producing 5-phospho-ribosyl-N-formylglycinamide (FGAR). Formate is provided by PurU via hydrolysis of 10-formyl-tetrahydrofolate. This chain is Formate-dependent phosphoribosylglycinamide formyltransferase, found in Pasteurella multocida (strain Pm70).